The sequence spans 225 residues: MLYENMSDSFLLSDAGLEFDEALLEVDQEKDDYLDDFENWTVVPVETIEGINYYPNCLPESVQRNLINNVPKELLSIYGSGKQSHLYIPFPAHINCLNDYIPSDFKQRLWKGQDAEAIIMQVYNPGDGIIPHKDLEMFGDGVAIFSFLSNTTMIFTHPELKLKSKIRLEKGSLLLMSGTARYDWFHEIPFRAGDWVMNDGEEKWVSRSQRLSVTMRRIIENHVFG.

In terms of domain architecture, Fe2OG dioxygenase spans 114 to 219; sequence DAEAIIMQVY…RLSVTMRRII (106 aa).

It belongs to the iron/ascorbate-dependent oxidoreductase family.

Its subcellular location is the cytoplasm. It is found in the nucleus. This is an uncharacterized protein from Schizosaccharomyces pombe (strain 972 / ATCC 24843) (Fission yeast).